The chain runs to 882 residues: Valine--tRNA ligase (882 aa).

A 'HIGH' region motif is present at residues 45-55; the sequence is PNVTGKLHLGH. Positions 519–523 match the 'KMSKS' region motif; sequence KMSKS. Lys-522 provides a ligand contact to ATP. Positions 808–882 form a coiled coil; it reads LADLLNVEEE…RIAEMHKLVK (75 aa).

It belongs to the class-I aminoacyl-tRNA synthetase family. ValS type 1 subfamily. Monomer.

Its subcellular location is the cytoplasm. The catalysed reaction is tRNA(Val) + L-valine + ATP = L-valyl-tRNA(Val) + AMP + diphosphate. Its function is as follows. Catalyzes the attachment of valine to tRNA(Val). As ValRS can inadvertently accommodate and process structurally similar amino acids such as threonine, to avoid such errors, it has a 'posttransfer' editing activity that hydrolyzes mischarged Thr-tRNA(Val) in a tRNA-dependent manner. The chain is Valine--tRNA ligase from Streptococcus pyogenes serotype M18 (strain MGAS8232).